Consider the following 261-residue polypeptide: Ribosomal RNA small subunit methyltransferase A (261 aa).

6 residues coordinate S-adenosyl-L-methionine: H13, L15, G40, E61, D85, and N105.

Belongs to the class I-like SAM-binding methyltransferase superfamily. rRNA adenine N(6)-methyltransferase family. RsmA subfamily.

The protein localises to the cytoplasm. The enzyme catalyses adenosine(1518)/adenosine(1519) in 16S rRNA + 4 S-adenosyl-L-methionine = N(6)-dimethyladenosine(1518)/N(6)-dimethyladenosine(1519) in 16S rRNA + 4 S-adenosyl-L-homocysteine + 4 H(+). Its function is as follows. Specifically dimethylates two adjacent adenosines (A1518 and A1519) in the loop of a conserved hairpin near the 3'-end of 16S rRNA in the 30S particle. May play a critical role in biogenesis of 30S subunits. The sequence is that of Ribosomal RNA small subunit methyltransferase A from Flavobacterium johnsoniae (strain ATCC 17061 / DSM 2064 / JCM 8514 / BCRC 14874 / CCUG 350202 / NBRC 14942 / NCIMB 11054 / UW101) (Cytophaga johnsonae).